The primary structure comprises 355 residues: uncharacterized protein (355 aa).

It belongs to the TmcAL family.

This is an uncharacterized protein from Methanocaldococcus jannaschii (strain ATCC 43067 / DSM 2661 / JAL-1 / JCM 10045 / NBRC 100440) (Methanococcus jannaschii).